Reading from the N-terminus, the 145-residue chain is Lipoprotein signal peptidase (145 aa).

Helical transmembrane passes span 1–21 (MVYI…LLVM), 57–77 (YLFI…YYKT), and 79–99 (GSGM…GNLI). Active-site residues include aspartate 109 and aspartate 123. Residues 115–135 (IWPVFNLADSSVVIGAALLIL) form a helical membrane-spanning segment.

Belongs to the peptidase A8 family.

Its subcellular location is the cell inner membrane. It carries out the reaction Release of signal peptides from bacterial membrane prolipoproteins. Hydrolyzes -Xaa-Yaa-Zaa-|-(S,diacylglyceryl)Cys-, in which Xaa is hydrophobic (preferably Leu), and Yaa (Ala or Ser) and Zaa (Gly or Ala) have small, neutral side chains.. It participates in protein modification; lipoprotein biosynthesis (signal peptide cleavage). In terms of biological role, this protein specifically catalyzes the removal of signal peptides from prolipoproteins. In Halothermothrix orenii (strain H 168 / OCM 544 / DSM 9562), this protein is Lipoprotein signal peptidase.